The primary structure comprises 344 residues: Holliday junction branch migration complex subunit RuvB (344 aa).

The large ATPase domain (RuvB-L) stretch occupies residues 1–182 (MRIELLNTPV…FGISNRFDYY (182 aa)). ATP contacts are provided by residues Ile21, Arg22, Gly63, Lys66, Thr67, Thr68, 129–131 (EDF), Arg172, Tyr182, and Arg219. Thr67 contacts Mg(2+). Residues 183–253 (PPELLETILM…TAMKTLDSLE (71 aa)) are small ATPAse domain (RuvB-S). The tract at residues 256 to 344 (EEGLDEMDKK…GTLFDGQEHV (89 aa)) is head domain (RuvB-H). Residues Arg311 and Arg316 each contribute to the DNA site.

Belongs to the RuvB family. Homohexamer. Forms an RuvA(8)-RuvB(12)-Holliday junction (HJ) complex. HJ DNA is sandwiched between 2 RuvA tetramers; dsDNA enters through RuvA and exits via RuvB. An RuvB hexamer assembles on each DNA strand where it exits the tetramer. Each RuvB hexamer is contacted by two RuvA subunits (via domain III) on 2 adjacent RuvB subunits; this complex drives branch migration. In the full resolvosome a probable DNA-RuvA(4)-RuvB(12)-RuvC(2) complex forms which resolves the HJ.

Its subcellular location is the cytoplasm. It catalyses the reaction ATP + H2O = ADP + phosphate + H(+). The RuvA-RuvB-RuvC complex processes Holliday junction (HJ) DNA during genetic recombination and DNA repair, while the RuvA-RuvB complex plays an important role in the rescue of blocked DNA replication forks via replication fork reversal (RFR). RuvA specifically binds to HJ cruciform DNA, conferring on it an open structure. The RuvB hexamer acts as an ATP-dependent pump, pulling dsDNA into and through the RuvAB complex. RuvB forms 2 homohexamers on either side of HJ DNA bound by 1 or 2 RuvA tetramers; 4 subunits per hexamer contact DNA at a time. Coordinated motions by a converter formed by DNA-disengaged RuvB subunits stimulates ATP hydrolysis and nucleotide exchange. Immobilization of the converter enables RuvB to convert the ATP-contained energy into a lever motion, pulling 2 nucleotides of DNA out of the RuvA tetramer per ATP hydrolyzed, thus driving DNA branch migration. The RuvB motors rotate together with the DNA substrate, which together with the progressing nucleotide cycle form the mechanistic basis for DNA recombination by continuous HJ branch migration. Branch migration allows RuvC to scan DNA until it finds its consensus sequence, where it cleaves and resolves cruciform DNA. This is Holliday junction branch migration complex subunit RuvB from Chlorobium luteolum (strain DSM 273 / BCRC 81028 / 2530) (Pelodictyon luteolum).